Reading from the N-terminus, the 120-residue chain is Putative defensin-like protein 179 (120 aa).

The N-terminal stretch at 1–27 is a signal peptide; sequence MERTSTSLLFLLSLLIIFASAVNQIRA. Intrachain disulfides connect Cys37–Cys56, Cys40–Cys63, Cys44–Cys65, Cys74–Cys120, Cys85–Cys105, Cys90–Cys114, and Cys94–Cys116.

It belongs to the DEFL family.

The protein resides in the secreted. The chain is Putative defensin-like protein 179 (LCR57) from Arabidopsis thaliana (Mouse-ear cress).